A 426-amino-acid polypeptide reads, in one-letter code: Pannexin-1 (426 aa).

Topologically, residues 1 to 40 are cytoplasmic; sequence MAIAQLATEYVFSDFLLKEPTEPKFKGLRLELAVDKMVTC. Cys40 bears the S-nitrosocysteine mark. The chain crosses the membrane as a helical span at residues 41-61; it reads IAVGLPLLLISLAFAQEISIG. Over 62–106 the chain is Extracellular; sequence TQISCFSPSSFSWRQAAFVDSYCWAAVQQKNSLQSESGNLPLWLH. 2 disulfide bridges follow: Cys66–Cys265 and Cys84–Cys246. The helical transmembrane segment at 107-127 threads the bilayer; the sequence is KFFPYILLLFAILLYLPPLFW. The Cytoplasmic segment spans residues 128 to 217; sequence RFAAAPHICS…NLIIKYISCR (90 aa). Tyr199 carries the phosphotyrosine modification. The chain crosses the membrane as a helical span at residues 218–238; sequence LLTLIIILLACIYLGYYFSLS. Topologically, residues 239–266 are extracellular; the sequence is SLSDEFVCSIKSGILRNDSTVPDQFQCK. The N-linked (GlcNAc...) asparagine glycan is linked to Asn255. A helical membrane pass occupies residues 267–287; sequence LIAVGIFQLLSVINLVVYVLL. The Cytoplasmic portion of the chain corresponds to 288–426; sequence APVVVYTLFV…ARQRLLDSSC (139 aa). Cys347 is modified (S-nitrosocysteine). The segment covering 405–414 has biased composition (polar residues); sequence DSETKANNGE. The interval 405-426 is disordered; sequence DSETKANNGEKNARQRLLDSSC. Residues 415–426 are compositionally biased toward basic and acidic residues; it reads KNARQRLLDSSC.

It belongs to the pannexin family. In terms of assembly, homoheptameric. S-nitrosylation inhibits channel currents and ATP release. Post-translationally, N-glycosylation plays a role in cell surface targeting. Glycosylation at its extracellular surface makes unlikely that two oligomers could dock to form an intercellular channel such as in gap junctions. Exists in three glycosylation states: non-glycosylated (GLY0), high-mannose glycosylated (GLY1), and fully mature glycosylated (GLY2). In terms of processing, cleaved by CASP3 and CASP7 during apoptosis. Cleavage opens the channel for the release of metabolites and induces plasma membrane permeability during apoptosis. Phosphorylated at Tyr-199 by SRC. Phosphorylation activates ATP release. Constitutively phosphorylated in vascular smooth muscle cells. As to expression, widely expressed. Highest expression is observed in oocytes and brain. Detected at very low levels in sperm cells.

It is found in the cell membrane. The protein resides in the endoplasmic reticulum membrane. The catalysed reaction is chloride(in) = chloride(out). It catalyses the reaction iodide(out) = iodide(in). It carries out the reaction ATP(in) = ATP(out). The enzyme catalyses K(+)(in) = K(+)(out). The catalysed reaction is Ca(2+)(in) = Ca(2+)(out). It catalyses the reaction Na(+)(in) = Na(+)(out). It carries out the reaction nitrate(in) = nitrate(out). The enzyme catalyses L-aspartate(out) = L-aspartate(in). The catalysed reaction is L-glutamate(out) = L-glutamate(in). It catalyses the reaction D-gluconate(in) = D-gluconate(out). It carries out the reaction spermidine(in) = spermidine(out). Its function is as follows. Ion channel involved in a variety of physiological functions such as blood pressure regulation, apoptotic cell clearance and oogenesis. Forms anion-selective channels with relatively low conductance and an order of permeabilities: nitrate&gt;iodide&gt;chlroride&gt;&gt;aspartate=glutamate=gluconate. Can release ATP upon activation through phosphorylation or cleavage at C-terminus. May play a role as a Ca(2+)-leak channel to regulate ER Ca(2+) homeostasis. In terms of biological role, during apoptosis, the C terminal tail is cleaved by caspases, which opens the main pore acting as a large-pore ATP efflux channel with a broad distribution, which allows the regulated release of molecules and ions smaller than 1 kDa, such as nucleotides ATP and UTP, and selective plasma membrane permeability to attract phagocytes that engulf the dying cells. The polypeptide is Pannexin-1 (Homo sapiens (Human)).